A 284-amino-acid chain; its full sequence is MPSSTAMVPGTRGGWHCLVLTTAAALTQLMWLPGCCGSYIVGGHEVTPHSRPYMASVSFEGHHYCGGFLIHTHWVVSAAHCFSDRDPSMGLVVLGAHALLAPEPTQQTFSIAAAVSHPDFQPATQANDICLLRLNGSAVLGPAVRLLRLPRRNAKPPAAGTRCHVSGWGFVSDFEEPPPGLMEVEVRILDLSVCNSSWQGQLNPAMLCTHSGDRRRRGFCSADSGGPLVCGRRAHGLVSFSGLWCGDPKTPDVYTQVSAFVTWIWDVVRASSSPGSTGRSVRAV.

Positions 1 to 35 (MPSSTAMVPGTRGGWHCLVLTTAAALTQLMWLPGC) are cleaved as a signal peptide. A Peptidase S1 domain is found at 40-269 (IVGGHEVTPH…FVTWIWDVVR (230 aa)). Cysteine 65 and cysteine 81 are oxidised to a cystine. Active-site charge relay system residues include histidine 80 and aspartate 128. Asparagine 135 is a glycosylation site (N-linked (GlcNAc...) asparagine). Disulfide bonds link cysteine 163–cysteine 230, cysteine 194–cysteine 208, and cysteine 220–cysteine 245. Serine 224 (charge relay system) is an active-site residue.

It belongs to the peptidase S1 family. Post-translationally, after cleavage of the signal peptide, the N-terminus is probably further processed by CTSC. Processing by CTSC is probably required for accumulation in cytoplasmic granules; in the absence of CTSC the protein does not accumulate. N-glycosylated.

It is found in the cytoplasmic granule lumen. It localises to the secreted. Its function is as follows. Serine protease that cleaves preferentially after Arg residues. Can also cleave after citrulline (deimidated arginine) and methylarginine residues. The protein is Serine protease 57 (Prss57) of Mus musculus (Mouse).